The sequence spans 509 residues: Methylthioalkylmalate synthase 1-1, chloroplastic (509 aa).

Residues Met-1–Tyr-55 constitute a chloroplast transit peptide. Residues Val-91–Met-365 form the Pyruvate carboxyltransferase domain. Asp-100, His-298, and His-300 together coordinate Mn(2+).

The protein belongs to the alpha-IPM synthase/homocitrate synthase family. As to quaternary structure, monomer. The cofactor is Mn(2+). Co(2+) is required as a cofactor.

The protein resides in the plastid. The protein localises to the chloroplast. It catalyses the reaction 4-methylsulfanyl-2-oxobutanoate + acetyl-CoA + H2O = 2-(2-methylsulfanyl)ethylmalate + CoA + H(+). It functions in the pathway secondary metabolite biosynthesis. Inhibited by EDTA, Cu(2+) and Zn(2+). Its function is as follows. Determines the side chain length of aliphatic glucosinolate structures. Involved in the biosynthesis of glucosinolate derivative natural products such as 6-(methylsulfinyl)hexylisothiocyanate (6-MSITC), a compound found in wasabi with diverse health-promoting properties. Catalyzes the conversion of 4-methylsulfanyl-2-oxobutanoate (4-MTOB) into 2-(2-methylsulfanyl)ethylmalate (2-(2-MT)EM). The sequence is that of Methylthioalkylmalate synthase 1-1, chloroplastic from Eutrema japonicum (Wasabi plant).